Here is a 327-residue protein sequence, read N- to C-terminus: MAEVGVLLLNLGGPDKQEDVRPFLYNLFADPEIIRIPVPPLQKPLAWLISTLRAPKSRKNYQAIGGGSPLRAITNQQGRVLKKALAARGLDIEVYVGMRYWHPFTEEAVRKIKADGIRRLVLLPLYPQYSISTSGSSFKLLDQIWARDPSLKAIERITINSWYSRPGYIRAMGERVREGLDKFDNPDGVHILFSAHGVPRTYVDQDGDPYQRQTEETVDLVMQSLGRPNAHSLAYQSRVGPVEWLKPYTEDTINELAQKGVRSLLAVPVSFISEHIETLQEIEIEYREVAEAAGIHDFRRAKALNVNKTFIDDLAEMVIENLGVYSR.

Residues His196 and Glu277 each contribute to the Fe cation site.

The protein belongs to the ferrochelatase family.

It is found in the cytoplasm. The enzyme catalyses heme b + 2 H(+) = protoporphyrin IX + Fe(2+). It functions in the pathway porphyrin-containing compound metabolism; protoheme biosynthesis; protoheme from protoporphyrin-IX: step 1/1. Functionally, catalyzes the ferrous insertion into protoporphyrin IX. The protein is Ferrochelatase of Gloeobacter violaceus (strain ATCC 29082 / PCC 7421).